The chain runs to 438 residues: Death-associated inhibitor of apoptosis 1 (438 aa).

One copy of the BIR 1 repeat lies at 44–110 (EETRLKTFTD…QRWSPNCPLL (67 aa)). The tract at residues 194–213 (TATQATGDVQPETCRPSAAS) is disordered. Residues 226–293 (ETARLRTFEA…ALWLSQCRFV (68 aa)) form a BIR 2 repeat. Residues Cys-263, Cys-266, His-283, and Cys-290 each coordinate Zn(2+). A disordered region spans residues 322-346 (GGVAVASTQASEEEQQTSLSSEEAV). The segment covering 327–345 (ASTQASEEEQQTSLSSEEA) has biased composition (low complexity). An RING-type zinc finger spans residues 391-426 (CKICYGAEYNTAFLPCGHVVACAKCASSVTKCPLCR).

This sequence belongs to the IAP family. As to quaternary structure, interacts (via BIR 2 domain) with Dronc (via residues 114-125). Rpr, hid and grim can outcompete Dronc for binding Diap1 therefore removing Diap1-mediated ubiquitination. Interacts (via BIR 2 domain) with HtrA2; this displaces any bound Dronc. Interacts with Strica. The N-terminally cleaved form interacts with Ubr3 (via UBR-type zinc finger); the interaction promotes the recruitment and uniquitination of substrate capases such as Dronc. Post-translationally, ubiquitinated and degraded by HtrA2 in apoptotic cells; proteolytic cleavage at specific sites in the BIR domain linker region generating inactive fragments. Mutation of one site reduces but does not abolish cleavage as another site is selected by the protease.

It catalyses the reaction S-ubiquitinyl-[E2 ubiquitin-conjugating enzyme]-L-cysteine + [acceptor protein]-L-lysine = [E2 ubiquitin-conjugating enzyme]-L-cysteine + N(6)-ubiquitinyl-[acceptor protein]-L-lysine.. Its function is as follows. Anti-apoptotic protein which functions as a caspase regulator, using its E3 ubiquitin-protein ligase activity to smother caspase activity. Binds, ubiquitinates and inactivates initiator caspase Dronc, and effector caspases Drice and Dcp-1. Acts as a Nedd8-E3 ubiquitin-protein ligase for Drice. Suppresses apoptosis by targeting the apoptosome for ubiquitination and inactivation. Plays an important role in cell motility. Overexpression suppresses rpr and hid-dependent cell death in the eye. Interaction of Diap1 with Dronc is required to suppress Dronc-mediated cell death through Diap1-mediated ubiquitination of Dronc. Acts as a positive regulator of Wnt signaling. The sequence is that of Death-associated inhibitor of apoptosis 1 (Diap1) from Drosophila melanogaster (Fruit fly).